The following is a 573-amino-acid chain: Protein phosphatase EYA3 (573 aa).

The residue at position 1 (Met-1) is an N-acetylmethionine. Disordered stretches follow at residues 1–46 (MEEE…LASN) and 236–296 (TYQS…DATS). Positions 20–46 (SGEQTISQVSNPDVSDQKPETSSLASN) are enriched in polar residues. Residues 254–271 (LSSGDPSTSPSLSQTTPS) show a composition bias toward low complexity. Residues Ser-262 and Ser-266 each carry the phosphoserine modification. Residue Asp-309 is the Nucleophile of the active site. Mg(2+) contacts are provided by Asp-309 and Asp-311. The active-site Proton donor is Asp-311. Phosphoserine occurs at positions 438 and 472. Asp-537 contributes to the Mg(2+) binding site.

This sequence belongs to the HAD-like hydrolase superfamily. EYA family. In terms of assembly, interacts with SIX1 and DACH1, and probably SIX2, SIX4, SIX5. Mg(2+) is required as a cofactor. Post-translationally, ser-266 phosphorylation is required for localization at sites of DNA damage and directing interaction with H2AX.

It is found in the cytoplasm. It localises to the nucleus. It carries out the reaction O-phospho-L-tyrosyl-[protein] + H2O = L-tyrosyl-[protein] + phosphate. Tyrosine phosphatase that specifically dephosphorylates 'Tyr-142' of histone H2AX (H2AXY142ph). 'Tyr-142' phosphorylation of histone H2AX plays a central role in DNA repair and acts as a mark that distinguishes between apoptotic and repair responses to genotoxic stress. Promotes efficient DNA repair by dephosphorylating H2AX, promoting the recruitment of DNA repair complexes containing MDC1. Its function as histone phosphatase probably explains its role in transcription regulation during organogenesis. Coactivates SIX1, and seems to coactivate SIX2, SIX4 and SIX5. The repression of precursor cell proliferation in myoblasts by SIX1 is switched to activation through recruitment of EYA3 to the SIX1-DACH1 complex and seems to be dependent on EYA3 phosphatase activity. May be involved in development of the eye. The protein is Protein phosphatase EYA3 (EYA3) of Homo sapiens (Human).